The sequence spans 370 residues: Glutamate 5-kinase (370 aa).

K17 lines the ATP pocket. S57, D144, and N156 together coordinate substrate. Residues 176 to 177 (SD) and 220 to 226 (TGGMVSK) contribute to the ATP site. A PUA domain is found at 282–360 (SGTLTLDDGA…SDLPAEMRRP (79 aa)).

Belongs to the glutamate 5-kinase family.

The protein resides in the cytoplasm. It catalyses the reaction L-glutamate + ATP = L-glutamyl 5-phosphate + ADP. Its pathway is amino-acid biosynthesis; L-proline biosynthesis; L-glutamate 5-semialdehyde from L-glutamate: step 1/2. Its function is as follows. Catalyzes the transfer of a phosphate group to glutamate to form L-glutamate 5-phosphate. The protein is Glutamate 5-kinase of Mycolicibacterium gilvum (strain PYR-GCK) (Mycobacterium gilvum (strain PYR-GCK)).